Reading from the N-terminus, the 139-residue chain is Acidic phospholipase A2 BpPLA2-TXI (139 aa).

A signal peptide spans 1–16 (MRTLWIMAVLLVGVEG). The cysteines at positions 44 and 60 are disulfide-linked. Residues G45 and G47 each coordinate Ca(2+). H63 is a catalytic residue. D64 provides a ligand contact to Ca(2+). 3 disulfide bridges follow: C65–C139, C73–C97, and C91–C102.

The protein belongs to the phospholipase A2 family. Group II subfamily. D49 sub-subfamily. It depends on Ca(2+) as a cofactor. Expressed by the venom gland.

It is found in the secreted. It carries out the reaction a 1,2-diacyl-sn-glycero-3-phosphocholine + H2O = a 1-acyl-sn-glycero-3-phosphocholine + a fatty acid + H(+). Functionally, PLA2 catalyzes the calcium-dependent hydrolysis of the 2-acyl groups in 3-sn-phosphoglycerides. The chain is Acidic phospholipase A2 BpPLA2-TXI from Bothrops pauloensis (Neuwied's lancehead).